The sequence spans 131 residues: Translation initiation factor 5A (131 aa).

At Lys36 the chain carries Hypusine.

It belongs to the eIF-5A family. The N-terminus is blocked.

The protein localises to the cytoplasm. Functionally, functions by promoting the formation of the first peptide bond. The sequence is that of Translation initiation factor 5A (eif5a) from Sulfolobus acidocaldarius (strain ATCC 33909 / DSM 639 / JCM 8929 / NBRC 15157 / NCIMB 11770).